A 357-amino-acid chain; its full sequence is Histidine biosynthesis bifunctional protein HisB (357 aa).

The interval 1-167 (MNDKILFIDR…IHKYLMQNSH (167 aa)) is histidinol-phosphatase. Asp-9 functions as the Nucleophile in the catalytic mechanism. 2 residues coordinate Mg(2+): Asp-9 and Asp-11. Catalysis depends on Asp-11, which acts as the Proton donor. Zn(2+) is bound by residues Cys-93, His-95, Cys-101, and Cys-103. Asp-130 serves as a coordination point for Mg(2+). Positions 168 to 357 (RVAHIQRITN…QIPSSKGILL (190 aa)) are imidazoleglycerol-phosphate dehydratase.

This sequence in the N-terminal section; belongs to the histidinol-phosphatase family. In the C-terminal section; belongs to the imidazoleglycerol-phosphate dehydratase family. Mg(2+) is required as a cofactor. Requires Zn(2+) as cofactor.

It is found in the cytoplasm. It carries out the reaction D-erythro-1-(imidazol-4-yl)glycerol 3-phosphate = 3-(imidazol-4-yl)-2-oxopropyl phosphate + H2O. The catalysed reaction is L-histidinol phosphate + H2O = L-histidinol + phosphate. The protein operates within amino-acid biosynthesis; L-histidine biosynthesis; L-histidine from 5-phospho-alpha-D-ribose 1-diphosphate: step 6/9. Its pathway is amino-acid biosynthesis; L-histidine biosynthesis; L-histidine from 5-phospho-alpha-D-ribose 1-diphosphate: step 8/9. In Blochmanniella floridana, this protein is Histidine biosynthesis bifunctional protein HisB.